Here is a 240-residue protein sequence, read N- to C-terminus: Urease accessory protein UreF (240 aa).

This sequence belongs to the UreF family. UreD, UreF and UreG form a complex that acts as a GTP-hydrolysis-dependent molecular chaperone, activating the urease apoprotein by helping to assemble the nickel containing metallocenter of UreC. The UreE protein probably delivers the nickel.

Its subcellular location is the cytoplasm. In terms of biological role, required for maturation of urease via the functional incorporation of the urease nickel metallocenter. In Bradyrhizobium sp. (strain BTAi1 / ATCC BAA-1182), this protein is Urease accessory protein UreF.